Here is a 305-residue protein sequence, read N- to C-terminus: UDP-3-O-acyl-N-acetylglucosamine deacetylase (305 aa).

The Zn(2+) site is built by histidine 79, histidine 238, and aspartate 242. Histidine 265 serves as the catalytic Proton donor.

Belongs to the LpxC family. It depends on Zn(2+) as a cofactor.

The enzyme catalyses a UDP-3-O-[(3R)-3-hydroxyacyl]-N-acetyl-alpha-D-glucosamine + H2O = a UDP-3-O-[(3R)-3-hydroxyacyl]-alpha-D-glucosamine + acetate. It functions in the pathway glycolipid biosynthesis; lipid IV(A) biosynthesis; lipid IV(A) from (3R)-3-hydroxytetradecanoyl-[acyl-carrier-protein] and UDP-N-acetyl-alpha-D-glucosamine: step 2/6. Catalyzes the hydrolysis of UDP-3-O-myristoyl-N-acetylglucosamine to form UDP-3-O-myristoylglucosamine and acetate, the committed step in lipid A biosynthesis. The protein is UDP-3-O-acyl-N-acetylglucosamine deacetylase of Shewanella woodyi (strain ATCC 51908 / MS32).